A 239-amino-acid chain; its full sequence is Glucosamine-6-phosphate deaminase (239 aa).

The active-site Proton acceptor; for enolization step is Asp-62. Asn-128 serves as the catalytic For ring-opening step. The Proton acceptor; for ring-opening step role is filled by His-130. The active-site For ring-opening step is the Glu-135.

Belongs to the glucosamine/galactosamine-6-phosphate isomerase family. NagB subfamily.

The catalysed reaction is alpha-D-glucosamine 6-phosphate + H2O = beta-D-fructose 6-phosphate + NH4(+). It participates in amino-sugar metabolism; N-acetylneuraminate degradation; D-fructose 6-phosphate from N-acetylneuraminate: step 5/5. In terms of biological role, catalyzes the reversible isomerization-deamination of glucosamine 6-phosphate (GlcN6P) to form fructose 6-phosphate (Fru6P) and ammonium ion. The protein is Glucosamine-6-phosphate deaminase of Lactobacillus acidophilus (strain ATCC 700396 / NCK56 / N2 / NCFM).